The primary structure comprises 77 residues: MKEQKWVHEGLITESLPNGMFRVRLDNEDLILGYISGRIRRSFIRILPGDRVKIEVSRYDSTRGRIIYRLRNKDSND.

An S1-like domain is found at 1 to 71 (MKEQKWVHEG…TRGRIIYRLR (71 aa)).

This sequence belongs to the IF-1 family. Component of the 30S ribosomal translation pre-initiation complex which assembles on the 30S ribosome in the order IF-2 and IF-3, IF-1 and N-formylmethionyl-tRNA(fMet); mRNA recruitment can occur at any time during PIC assembly.

It is found in the plastid. The protein localises to the chloroplast. Its function is as follows. One of the essential components for the initiation of protein synthesis. Stabilizes the binding of IF-2 and IF-3 on the 30S subunit to which N-formylmethionyl-tRNA(fMet) subsequently binds. Helps modulate mRNA selection, yielding the 30S pre-initiation complex (PIC). Upon addition of the 50S ribosomal subunit IF-1, IF-2 and IF-3 are released leaving the mature 70S translation initiation complex. The polypeptide is Translation initiation factor IF-1, chloroplastic (Cercidiphyllum japonicum (Katsura tree)).